A 119-amino-acid polypeptide reads, in one-letter code: uncharacterized protein (119 aa).

A helical transmembrane segment spans residues 74–91 (LSVHFLLNVISAILSMLI).

The protein localises to the membrane. This is an uncharacterized protein from Schizosaccharomyces pombe (strain 972 / ATCC 24843) (Fission yeast).